We begin with the raw amino-acid sequence, 567 residues long: Proline--tRNA ligase (567 aa).

Belongs to the class-II aminoacyl-tRNA synthetase family. ProS type 1 subfamily. As to quaternary structure, homodimer.

The protein localises to the cytoplasm. The enzyme catalyses tRNA(Pro) + L-proline + ATP = L-prolyl-tRNA(Pro) + AMP + diphosphate. Functionally, catalyzes the attachment of proline to tRNA(Pro) in a two-step reaction: proline is first activated by ATP to form Pro-AMP and then transferred to the acceptor end of tRNA(Pro). As ProRS can inadvertently accommodate and process non-cognate amino acids such as alanine and cysteine, to avoid such errors it has two additional distinct editing activities against alanine. One activity is designated as 'pretransfer' editing and involves the tRNA(Pro)-independent hydrolysis of activated Ala-AMP. The other activity is designated 'posttransfer' editing and involves deacylation of mischarged Ala-tRNA(Pro). The misacylated Cys-tRNA(Pro) is not edited by ProRS. In Staphylococcus aureus (strain Mu3 / ATCC 700698), this protein is Proline--tRNA ligase.